The sequence spans 453 residues: MFSRLAARLPKASALNGVAARQVRNLSQPAITGSKGRNMPAREPRTTAAATGAEATFTIRDGPVFQGTAFGANTNISGEAVFTTSLVGYPESMTDPSYRGQILVFTQPLIGNYGVPSNERDEFNLLKYFESPHIQCAGIVVSDVATQYSHWTAVQSLGEWCASEGIPAISGVDTRAIVTYLREQGSSLARISIGDEYDADEDEGFIDPGQINLVKRVSTKAPFVVTNPNAKFHVALIDCGVKENILRSLVSRGASVTVFPYNYPIHKVAENFDGVFISNGPGDPTHCQETVYNLAKLMETSPIPIMGICLGHQLLALAVGAKTIKLKYGNRAHNIPALDLTTGQCHITSQNHGYAVDISTLPSDFKEYFVNLNDGSNEGMMHKTRPIFSTQFHPEAKGGPMDSSYLFDKYMENVELFKSNSQVYRDNRPTQFMIDILSKERVGVEPTPLSNAA.

Residues 1–33 (MFSRLAARLPKASALNGVAARQVRNLSQPAITG) constitute a mitochondrion transit peptide. Residues 26–50 (LSQPAITGSKGRNMPAREPRTTAAA) form a disordered region. L-glutamine is bound by residues Ser97, Gly280, and Gly282. The region spanning 233–420 (HVALIDCGVK…MENVELFKSN (188 aa)) is the Glutamine amidotransferase type-1 domain. Residue Cys309 is the Nucleophile of the active site. Residues Leu310, Gln313, Asn351, Gly353, and Tyr354 each coordinate L-glutamine. Catalysis depends on residues His393 and Glu395.

Belongs to the CarA family. In terms of assembly, heterodimer composed of 2 chains; the small (or glutamine) chain promotes the hydrolysis of glutamine to ammonia, which is used by the large (or ammonia) chain to synthesize carbamoyl phosphate.

The protein localises to the mitochondrion matrix. The catalysed reaction is hydrogencarbonate + L-glutamine + 2 ATP + H2O = carbamoyl phosphate + L-glutamate + 2 ADP + phosphate + 2 H(+). It catalyses the reaction L-glutamine + H2O = L-glutamate + NH4(+). It participates in amino-acid biosynthesis; L-arginine biosynthesis; carbamoyl phosphate from bicarbonate: step 1/1. Small subunit of the arginine-specific carbamoyl phosphate synthase (CPSase). CPSase catalyzes the formation of carbamoyl phosphate from the ammonia moiety of glutamine, carbonate, and phosphate donated by ATP, the first step of the arginine biosynthetic pathway. The small subunit (glutamine amidotransferase) binds and cleaves glutamine to supply the large subunit with the substrate ammonia. This Neurospora crassa (strain ATCC 24698 / 74-OR23-1A / CBS 708.71 / DSM 1257 / FGSC 987) protein is Carbamoyl phosphate synthase arginine-specific small chain (arg-2).